Reading from the N-terminus, the 61-residue chain is Keratin-associated protein 8-1 (61 aa).

The interval 13–49 (GCYWGSYGYPLGYSVGCGYGSTYSPVGYGLGYGYNGC) is 11 X 2 AA repeats of G-[YCGS].

It belongs to the KRTAP type 8 family. In terms of assembly, interacts with hair keratins. As to expression, expression restricted exclusively to the cortical cells of hair follicles.

Functionally, in the hair cortex, hair keratin intermediate filaments are embedded in an interfilamentous matrix, consisting of hair keratin-associated proteins (KRTAP), which are essential for the formation of a rigid and resistant hair shaft through their extensive disulfide bond cross-linking with abundant cysteine residues of hair keratins. The matrix proteins include the high-sulfur and high-glycine-tyrosine keratins. In Mus musculus (Mouse), this protein is Keratin-associated protein 8-1 (Krtap8-1).